We begin with the raw amino-acid sequence, 179 residues long: Caveolin-1 (179 aa).

Serine 2 carries the N-acetylserine modification. Serine 2 carries the phosphoserine modification. The required for homooligomerization stretch occupies residues 2–95; sequence SGGKYVDSEG…WKASFTTFTV (94 aa). Residues 2-105 are Cytoplasmic-facing; the sequence is SGGKYVDSEG…TKYWFYRLLS (104 aa). Lysine 5 is modified (N6-acetyllysine; alternate). A Glycyl lysine isopeptide (Lys-Gly) (interchain with G-Cter in ubiquitin); alternate cross-link involves residue lysine 5. The residue at position 6 (tyrosine 6) is a Phosphotyrosine. Position 9 is a phosphoserine (serine 9). At tyrosine 14 the chain carries Phosphotyrosine; by ABL1. At tyrosine 25 the chain carries Phosphotyrosine. Glycyl lysine isopeptide (Lys-Gly) (interchain with G-Cter in ubiquitin) cross-links involve residues lysine 26 and lysine 30. Serine 37 is modified (phosphoserine). Glycyl lysine isopeptide (Lys-Gly) (interchain with G-Cter in ubiquitin) cross-links involve residues lysine 39, lysine 48, and lysine 58. The segment at 83-95 is interaction with CAVIN3; that stretch reads DGIWKASFTTFTV. Residues 106 to 126 constitute an intramembrane region (helical); the sequence is ALFGIPMALIWGIYFAILSFL. Topologically, residues 127–179 are cytoplasmic; sequence HIWAVVPCIKSFLIEIQCISRVYSIYVHTFCDPLFEAIGKVFSNIRINMQKEI. The segment at 132-143 is interacts with SPRY1, SPRY2, SPRY3 and SPRY4; sequence VPCIKSFLIEIQ. S-palmitoyl cysteine attachment occurs at residues cysteine 134, cysteine 144, and cysteine 157. Residues 150-161 are interacts with SPRY1, SPRY2, and SPRY4; sequence SIYVHTFCDPLF. The segment at 168-179 is interacts with SPRY1, SPRY2, SPRY3 and SPRY4; it reads FSNIRINMQKEI.

Belongs to the caveolin family. As to quaternary structure, homooligomer. Interacts with GLIPR2. Interacts with NOSTRIN. Interacts with SNAP25 and STX1A. Interacts (via the N-terminus) with DPP4; the interaction is direct. Interacts with CTNNB1, CDH1 and JUP. Interacts with PACSIN2; this interaction induces membrane tubulation. Interacts with SLC7A9. Interacts with BMX and BTK. Interacts with TGFBR1. Interacts with CAVIN3 (via leucine-zipper domain) in a cholesterol-sensitive manner. Interacts with CAVIN1. Interacts with EHD2 in a cholesterol-dependent manner. Forms a ternary complex with UBXN6 and VCP; mediates CAV1 targeting to lysosomes for degradation. Interacts with ABCG1; this interaction regulates ABCG1-mediated cholesterol efflux. Interacts with NEU3; this interaction enhances NEU3 sialidase activity within caveola. Interacts (via C-terminus) with SPRY1, SPRY2 (via C-terminus), SPRY3, and SPRY4. Interacts with IGFBP5; this interaction allows trafficking of IGFBP5 from the plasma membrane to the nucleus. Phosphorylated at Tyr-14 by ABL1 in response to oxidative stress. Post-translationally, ubiquitinated. Undergo monoubiquitination and multi- and/or polyubiquitination. Monoubiquitination of N-terminal lysines promotes integration in a ternary complex with UBXN6 and VCP which promotes oligomeric CAV1 targeting to lysosomes for degradation. Ubiquitinated by ZNRF1; leading to degradation and modulation of the TLR4-mediated immune response.

It localises to the golgi apparatus membrane. The protein localises to the cell membrane. Its subcellular location is the membrane. The protein resides in the caveola. It is found in the membrane raft. In terms of biological role, may act as a scaffolding protein within caveolar membranes. Forms a stable heterooligomeric complex with CAV2 that targets to lipid rafts and drives caveolae formation. Mediates the recruitment of CAVIN proteins (CAVIN1/2/3/4) to the caveolae. Interacts directly with G-protein alpha subunits and can functionally regulate their activity. Involved in the costimulatory signal essential for T-cell receptor (TCR)-mediated T-cell activation. Its binding to DPP4 induces T-cell proliferation and NF-kappa-B activation in a T-cell receptor/CD3-dependent manner. Recruits CTNNB1 to caveolar membranes and may regulate CTNNB1-mediated signaling through the Wnt pathway. Negatively regulates TGFB1-mediated activation of SMAD2/3 by mediating the internalization of TGFBR1 from membrane rafts leading to its subsequent degradation. Binds 20(S)-hydroxycholesterol (20(S)-OHC). This Eulemur macaco macaco (Black lemur) protein is Caveolin-1 (CAV1).